The following is a 568-amino-acid chain: Arginine--tRNA ligase (568 aa).

Positions 129-139 (ANPTGPLHIGH) match the 'HIGH' region motif.

Belongs to the class-I aminoacyl-tRNA synthetase family. In terms of assembly, monomer.

The protein localises to the cytoplasm. It catalyses the reaction tRNA(Arg) + L-arginine + ATP = L-arginyl-tRNA(Arg) + AMP + diphosphate. This is Arginine--tRNA ligase from Wolbachia pipientis wMel.